Here is a 210-residue protein sequence, read N- to C-terminus: 3-hexulose-6-phosphate synthase (210 aa).

Belongs to the HPS/KGPDC family. HPS subfamily.

It carries out the reaction D-ribulose 5-phosphate + formaldehyde = D-arabino-hex-3-ulose 6-phosphate. It functions in the pathway one-carbon metabolism; formaldehyde assimilation via RuMP pathway; D-fructose 6-phosphate from D-ribulose 5-phosphate and formaldehyde: step 1/2. Functionally, catalyzes the condensation of ribulose 5-phosphate with formaldehyde to form 3-hexulose 6-phosphate. The polypeptide is 3-hexulose-6-phosphate synthase (Staphylococcus aureus (strain NCTC 8325 / PS 47)).